A 305-amino-acid polypeptide reads, in one-letter code: tRNA dimethylallyltransferase (305 aa).

Residue Gly-15–Ser-22 participates in ATP binding. Thr-17–Ser-22 contributes to the substrate binding site. 2 interaction with substrate tRNA regions span residues Asp-40–Gln-43 and Gln-164–Arg-168.

The protein belongs to the IPP transferase family. As to quaternary structure, monomer. It depends on Mg(2+) as a cofactor.

It catalyses the reaction adenosine(37) in tRNA + dimethylallyl diphosphate = N(6)-dimethylallyladenosine(37) in tRNA + diphosphate. In terms of biological role, catalyzes the transfer of a dimethylallyl group onto the adenine at position 37 in tRNAs that read codons beginning with uridine, leading to the formation of N6-(dimethylallyl)adenosine (i(6)A). The protein is tRNA dimethylallyltransferase of Sinorhizobium medicae (strain WSM419) (Ensifer medicae).